A 399-amino-acid chain; its full sequence is Centrosomal protein 43 (399 aa).

Residues 70 to 102 (DGRLVASLVAEFLQFFNLDFTLAVFQPETSTFQ) form the LisH domain. Phosphothreonine is present on T143. The segment at 143 to 311 (TSGEGALDLS…LKESESKRGN (169 aa)) is disordered. Phosphoserine occurs at positions 152, 156, 160, and 202. Over residues 197–209 (NDASHSDTSISSS) the composition is skewed to low complexity. The segment covering 245 to 256 (PEEDDLEGDSFF) has biased composition (acidic residues). Over residues 286-302 (APPLKSGLSSLAGAPSL) the composition is skewed to low complexity. Phosphoserine is present on residues S301 and S326. The segment at 328–357 (GLGTGEEDDYVDDFNSTSHRSEKSELSIGE) is disordered. Phosphotyrosine is present on Y337.

It belongs to the CEP43 family. In terms of assembly, homodimer. Part of a ternary complex that contains CEP350, CEP43 and MAPRE1. Interacts directly with CEP350 and MAPRE1. Interacts with CEP19. Interacts (via N-terminus) with CEP350 (via C-terminus).

The protein resides in the cytoplasm. It is found in the cytoskeleton. It localises to the microtubule organizing center. Its subcellular location is the centrosome. The protein localises to the centriole. The protein resides in the cilium basal body. Its function is as follows. Required for anchoring microtubules to the centrosomes. Required for ciliation. This Bos taurus (Bovine) protein is Centrosomal protein 43 (CEP43).